A 447-amino-acid polypeptide reads, in one-letter code: N-succinylarginine dihydrolase (447 aa).

Residues 19–28 (AGLSFGNEAS), Asn110, and 137–138 (HR) each bind substrate. The active site involves Glu174. Arg212 lines the substrate pocket. Residue His248 is part of the active site. Residues Asp250 and Asn359 each coordinate substrate. The active-site Nucleophile is Cys365.

Belongs to the succinylarginine dihydrolase family. As to quaternary structure, homodimer.

The catalysed reaction is N(2)-succinyl-L-arginine + 2 H2O + 2 H(+) = N(2)-succinyl-L-ornithine + 2 NH4(+) + CO2. The protein operates within amino-acid degradation; L-arginine degradation via AST pathway; L-glutamate and succinate from L-arginine: step 2/5. Its function is as follows. Catalyzes the hydrolysis of N(2)-succinylarginine into N(2)-succinylornithine, ammonia and CO(2). This chain is N-succinylarginine dihydrolase, found in Escherichia coli O7:K1 (strain IAI39 / ExPEC).